The chain runs to 775 residues: Coiled-coil domain-containing protein 33 (775 aa).

Disordered regions lie at residues 1–23 and 68–87; these read MGRQKTKVPEEPQDRLDTSLDPY and EANNHSPQARTSVTSEPTRA. Residues 7-18 are compositionally biased toward basic and acidic residues; that stretch reads KVPEEPQDRLDT. One can recognise a C2 domain in the interval 12 to 141; it reads PQDRLDTSLD…RAFHPYHFEL (130 aa). Residues 71–84 show a composition bias toward polar residues; the sequence is NHSPQARTSVTSEP. Coiled-coil stretches lie at residues 414 to 561 and 672 to 715; these read VEMN…ERKE and DKFS…LQEQ. The disordered stretch occupies residues 735-775; it reads RSQGSTTPRQNLKDEGYPGNIERPLQTHLTPGTRDIRHHLR.

This is Coiled-coil domain-containing protein 33 (Ccdc33) from Rattus norvegicus (Rat).